The chain runs to 382 residues: Alkanesulfonate monooxygenase (382 aa).

Belongs to the SsuD family. As to quaternary structure, homotetramer.

The catalysed reaction is an alkanesulfonate + FMNH2 + O2 = an aldehyde + FMN + sulfite + H2O + 2 H(+). Catalyzes the desulfonation of aliphatic sulfonates. This Buttiauxella sp. (strain PNBS) protein is Alkanesulfonate monooxygenase.